The following is a 188-amino-acid chain: PRA1 family protein 3 (188 aa).

M1 bears the N-acetylmethionine mark. Residues 1-35 lie on the Cytoplasmic side of the membrane; the sequence is MDVNIAPLRAWDDFFPGSDRFAQPDFRDISKWNNR. The next 2 helical transmembrane spans lie at 36–56 and 57–77; these read VVSNLLYYQTNYLVVAAMMIS and VVGFLSPFNMILGGIVVVLVF. The Cytoplasmic segment spans residues 78 to 93; the sequence is TGFVWAAHNKDALRRL. Helical transmembrane passes span 94–114 and 115–135; these read KKRYPTTFVMVVMLASYFLIS and MFGGVMVFVFGITFPLLLMFI. Residues 103–117 form a required for homodimer formation and heterodimer formation with ARL6IP1 region; it reads MVVMLASYFLISMFG. Over 136–188 the chain is Cytoplasmic; it reads HASLRLRNLKNKLENKMEGIGLKRTPMGIVLDALEQQEEGINRLTDYISKVKE. The tract at residues 136 to 188 is targeting to endoplasmic reticulum membrane; it reads HASLRLRNLKNKLENKMEGIGLKRTPMGIVLDALEQQEEGINRLTDYISKVKE.

Belongs to the PRA1 family. As to quaternary structure, homodimer. Heterodimer with ARL6IP1. Forms multimers. Interacts with ARL6. Interacts with prenylated RAB1A and RAB3A. Interacts with SLC1A1/EAAC1. Interacts with RTN2 (via first transmembrane domain). Does not interact with VAMP1, VAMP2 or VAMP3.

The protein localises to the endoplasmic reticulum membrane. Its subcellular location is the cell membrane. It localises to the cytoplasm. It is found in the cytoskeleton. Its function is as follows. Regulates intracellular concentrations of taurine and glutamate. Negatively modulates SLC1A1/EAAC1 glutamate transport activity by decreasing its affinity for glutamate in a PKC activity-dependent manner. Plays a role in the retention of SLC1A1/EAAC1 in the endoplasmic reticulum. The protein is PRA1 family protein 3 (ARL6IP5) of Macaca fascicularis (Crab-eating macaque).